A 171-amino-acid chain; its full sequence is Large ribosomal subunit protein bL9 (171 aa).

It belongs to the bacterial ribosomal protein bL9 family.

Binds to the 23S rRNA. The sequence is that of Large ribosomal subunit protein bL9 from Orientia tsutsugamushi (strain Ikeda) (Rickettsia tsutsugamushi).